The primary structure comprises 439 residues: Glutamate--tRNA ligase 2 (439 aa).

The 'HIGH' region signature appears at 6–16 (PSPTGDMHIGN). A 'KMSKS' region motif is present at residues 232–236 (KMSKR). Residue lysine 235 participates in ATP binding.

It belongs to the class-I aminoacyl-tRNA synthetase family. Glutamate--tRNA ligase type 1 subfamily. Monomer.

Its subcellular location is the cytoplasm. The enzyme catalyses tRNA(Glu) + L-glutamate + ATP = L-glutamyl-tRNA(Glu) + AMP + diphosphate. Functionally, catalyzes the attachment of glutamate to tRNA(Glu) in a two-step reaction: glutamate is first activated by ATP to form Glu-AMP and then transferred to the acceptor end of tRNA(Glu). The protein is Glutamate--tRNA ligase 2 of Helicobacter pylori (strain P12).